The chain runs to 141 residues: ATP synthase epsilon chain (141 aa).

It belongs to the ATPase epsilon chain family. In terms of assembly, F-type ATPases have 2 components, CF(1) - the catalytic core - and CF(0) - the membrane proton channel. CF(1) has five subunits: alpha(3), beta(3), gamma(1), delta(1), epsilon(1). CF(0) has three main subunits: a, b and c.

It is found in the cell membrane. Its function is as follows. Produces ATP from ADP in the presence of a proton gradient across the membrane. The sequence is that of ATP synthase epsilon chain from Lactococcus lactis subsp. cremoris (strain SK11).